The following is a 254-amino-acid chain: Chymotrypsin-like serine proteinase (254 aa).

The signal sequence occupies residues 1 to 18 (MNALLNILLCTLAATALA). Positions 19–23 (EISPN) are cleaved as a propeptide — activation peptide. The 231-residue stretch at 24–254 (IVGGSNAAAG…SSFYNWVQTQ (231 aa)) folds into the Peptidase S1 domain. C53 and C69 are disulfide-bonded. Active-site charge relay system residues include H68 and D117. 3 disulfide bridges follow: C146-C218, C181-C199, and C208-C233. S212 serves as the catalytic Charge relay system.

This sequence belongs to the peptidase S1 family. Monomer. In terms of tissue distribution, expressed specifically in the distal quarter of the intestine.

The protein resides in the secreted. It localises to the extracellular space. Activated by an autocatalytic mechanism. Its function is as follows. Specificity similar to chymotrypsin. In Haliotis rufescens (California red abalone), this protein is Chymotrypsin-like serine proteinase.